A 305-amino-acid chain; its full sequence is CRISPR-associated endonuclease Cas1 (305 aa).

The sufficient for cleavage of ssRNA, ssDNA and Holliday junction DNA stretch occupies residues 96–278 (SDKLLYQAKL…EDVLAAGEIQ (183 aa)). E141, H208, and D221 together coordinate Mg(2+). The disordered stretch occupies residues 278-305 (QPPAPPEDAQPVAIPLPVSLGDAGHRSS).

Belongs to the CRISPR-associated endonuclease Cas1 family. As to quaternary structure, homodimer. Part of the Cas1-Cas2 complex. Interacts with RecB, RecC, RuvB, CasC and CasE. Forms a hexamer with 2 Cas1 dimers sandwiching a Cas2 dimer. The DNA lies across a flat surface extending from 1 Cas1 dimer, across the Cas2 dimer and contacting the other Cas1 dimer. Only 1 Cas1 protein from each dimer is catalytic, the other interacts with the Cas2 dimer and possibly target DNA. Requires Mg(2+) as cofactor.

The protein resides in the cytoplasm. Nuclease activity partially inhibited by CasE. CRISPR (clustered regularly interspaced short palindromic repeat), is an adaptive immune system that provides protection against mobile genetic elements (viruses, transposable elements and conjugative plasmids). CRISPR clusters contain sequences complementary to antecedent mobile elements and target invading nucleic acids. CRISPR clusters are transcribed and processed into CRISPR RNA (crRNA). The Cas1-Cas2 complex is involved in CRISPR adaptation, the first stage of CRISPR immunity, being required for the addition/removal of CRISPR spacers at the leader end of the CRISPR locus. The Cas1-Cas2 complex introduces staggered nicks into both strands of the CRISPR array near the leader repeat and joins the 5'-ends of the repeat strands with the 3'-ends of the new spacer sequence. Spacer DNA integration requires supercoiled target DNA and 3'-OH ends on the inserted (spacer) DNA and probably initiates with a nucleophilic attack of the C 3'-OH end of the protospacer on the minus strand of the first repeat sequence. Expression of Cas1-Cas2 in a strain lacking both genes permits spacer acquisition. Non-specifically binds DNA; the Cas1-Cas2 complex preferentially binds CRISPR-locus DNA. Highest binding is seen to a dual forked DNA complex with 3'-overhangs and a protospacer-adjacent motif-complement specifically positioned. The protospacer DNA lies across a flat surface extending from 1 Cas1 dimer, across the Cas2 dimer and contacting the other Cas1 dimer; the 23 bp-long ds section of the DNA is bracketed by 1 Tyr-22 from each of the Cas1 dimers. Cas1 cuts within the 3'-overhang, to generate a 33-nucleotide DNA that is probably incorporated into the CRISPR leader by a cut-and-paste mechanism. Cas1 alone endonucleolytically cleaves linear ssRNA, ssDNA and short (34 base) dsDNA as well as branched DNA substrates such as Holliday junctions, replication forks and 5'-flap DNA substrates. In vitro catalyzes a concerted transesterification reaction on branched DNA, as would be expected during integration of protospacers into the CRISPR leader sequence; Cas2 is not required in vitro. This reaction requires a 3'-OH group at the branch point. Genetic interactions suggest Cas1 interacts with components of the RecBC and RuvB DNA repair systems. This is CRISPR-associated endonuclease Cas1 (ygbT) from Escherichia coli (strain K12).